Reading from the N-terminus, the 701-residue chain is Polyribonucleotide nucleotidyltransferase (701 aa).

The Mg(2+) site is built by Asp490 and Asp496. One can recognise a KH domain in the interval 557–616 (PKVETMTIKPEKIRDVIGPGGKKINEIIDETGVKLDIEQDGTIFIGAVDQDMINRAREII). Residues 626-694 (GQVYNAKVRR…DKGRVNASHR (69 aa)) form the S1 motif domain.

Belongs to the polyribonucleotide nucleotidyltransferase family. It depends on Mg(2+) as a cofactor.

It localises to the cytoplasm. It catalyses the reaction RNA(n+1) + phosphate = RNA(n) + a ribonucleoside 5'-diphosphate. Functionally, involved in mRNA degradation. Catalyzes the phosphorolysis of single-stranded polyribonucleotides processively in the 3'- to 5'-direction. The polypeptide is Polyribonucleotide nucleotidyltransferase (Staphylococcus carnosus (strain TM300)).